A 263-amino-acid polypeptide reads, in one-letter code: Inactive adenylate kinase (263 aa).

Belongs to the adenylate kinase family.

Its subcellular location is the cytoplasm. In terms of biological role, lacks adenylate kinase activity. In Plasmodium falciparum (isolate 3D7), this protein is Inactive adenylate kinase.